The chain runs to 145 residues: Small ribosomal subunit protein bS6 (145 aa).

The protein belongs to the bacterial ribosomal protein bS6 family.

Binds together with bS18 to 16S ribosomal RNA. The sequence is that of Small ribosomal subunit protein bS6 from Mycoplasmopsis agalactiae (strain NCTC 10123 / CIP 59.7 / PG2) (Mycoplasma agalactiae).